The primary structure comprises 497 residues: MTSTPDSRSVLTVIILGASGDLAKKKTYPALFGLYLRDLLPSNTIIYGYARSHIEIGDFKARISKGLKGDEEKKKQFLNLLHYHSGKYDEKASYDEFEKLILAEEKKQQGVDKFNRLFYMAIPPSIFIEVSIGIHGSLISKNGWSRVIVEKPFGRDLASSRELVSELGKLFKEKDLFRIDHYLGKEMVQNLMVLRFANAVFEPLWSKSHISSITITFKEDIGTEGRGGYFDQFGIIRDVMQNHLLQVLSLVAMEPPVSLNADDITNEKVKLLRCIQPIKMSEVVLGQYTSDPEGKIPAYLDDEGVPKDSTTPTYAAAVFHINNPRWRGMPFILKCGKALDERKTEVRIQFKRPDNFLFSDDDISRNELVMRIQPGEAVYLKLLSKKPGLENKIEQTELDLSYRHRFENLDLPDAYERLILDSIKGDHNLFVRDDELDVAWQIFTPLLDQIEKEKIKPEPYSFGSRGPKSADELSKKFGFIRSLGYNWPGNSPQGSKK.

Residues 17–24, R51, and K151 contribute to the NADP(+) site; that span reads GASGDLAK. D-glucose 6-phosphate-binding positions include K151, 181-185, E219, and D238; that span reads HYLGK. H243 (proton acceptor) is an active-site residue. Position 334 (K334) interacts with NADP(+). K337 and R342 together coordinate D-glucose 6-phosphate. NADP(+) contacts are provided by K343, R347, and R371. A D-glucose 6-phosphate-binding site is contributed by Q373. Residues 379–381, 399–401, R465, and W487 each bind NADP(+); these read YLK and DLS.

It belongs to the glucose-6-phosphate dehydrogenase family.

The protein localises to the cytoplasm. It is found in the cytosol. It catalyses the reaction D-glucose 6-phosphate + NADP(+) = 6-phospho-D-glucono-1,5-lactone + NADPH + H(+). The protein operates within carbohydrate degradation; pentose phosphate pathway; D-ribulose 5-phosphate from D-glucose 6-phosphate (oxidative stage): step 1/3. Functionally, cytosolic glucose-6-phosphate dehydrogenase that catalyzes the first and rate-limiting step of the oxidative branch within the pentose phosphate pathway/shunt, an alternative route to glycolysis for the dissimilation of carbohydrates and a major source of reducing power and metabolic intermediates for fatty acid and nucleic acid biosynthetic processes. The chain is Glucose-6-phosphate 1-dehydrogenase (g6pd-1) from Dictyostelium discoideum (Social amoeba).